The primary structure comprises 221 residues: uncharacterized protein (221 aa).

Residues 33 to 167 (RPAKSAVMLY…VSPGANLELL (135 aa)) enclose the MOSC domain.

This is an uncharacterized protein from Bacillus subtilis (strain 168).